A 345-amino-acid polypeptide reads, in one-letter code: Transmembrane protein 144 homolog (345 aa).

The next 10 helical transmembrane spans lie at 3–23 (IAVGLSACALSSVLFGSMFVP), 32–52 (GIFVQWIMSTAILLVGIVVYS), 61–81 (PLAMLGGMFWALGNATAVPIM), 84–104 (IGIGMGMLVWGTTNCVAGWAA), 120–140 (PFLNYFGLVLVVFGGFLFSQI), 193–213 (LAIITSLVAGVFYGFTFVPVI), 233–253 (VFSHYIGIFCTASALMIGYVI), 265–285 (LVGPSMTAGSMWGIAQASWFV), 293–313 (AVSFPIISMVPGVIAALWSVF), and 324–344 (LRLLSIAVAITLIGAICVGVS).

This sequence belongs to the TMEM144 family.

Its subcellular location is the membrane. This is Transmembrane protein 144 homolog from Caenorhabditis elegans.